A 513-amino-acid polypeptide reads, in one-letter code: Sodium/potassium/calcium exchanger 5 (513 aa).

A signal peptide spans 1–35 (MRTDVFLQRRKRRDVLLSIIALLLLIFAIVHLVFC). The Extracellular portion of the chain corresponds to 36-78 (AGLSFQGSSSARVRRDLENASECVQPQSSEFPEGFFTVQERKD). The helical transmembrane segment at 79–99 (GGILIYFMIIFYMLLSVSIVC) threads the bilayer. Topologically, residues 100-123 (DEYFLPSLEVISERLGLSQDVAGA) are cytoplasmic. The chain crosses the membrane as a helical span at residues 124–144 (TFMAAGSSAPELVTAFLGVFV). Topologically, residues 145 to 148 (TKGD) are extracellular. A helical membrane pass occupies residues 149-169 (IGVSTIMGSAVYNLLCICAAC). Topologically, residues 170-181 (GLLSSAVGRLSC) are cytoplasmic. A helical membrane pass occupies residues 182 to 202 (WPLFRDCVAYAISVAAVIAII). Residues 203–207 (SDNRV) are Extracellular-facing. The chain crosses the membrane as a helical span at residues 208-228 (YWYDGACLLLVYGVYVAVLCF). The Cytoplasmic portion of the chain corresponds to 229–315 (DLRISEYVMQ…KSVFSMPDHD (87 aa)). The helical transmembrane segment at 316–336 (LKRILWVLSLPVSTLLFVSVP) threads the bilayer. Topologically, residues 337-350 (DCRRPFWKNFYMLT) are extracellular. Residues 351–371 (FLMSAVWISAFTYVLVWMVTI) traverse the membrane as a helical segment. At 372-381 (VGETLGIPDT) the chain is on the cytoplasmic side. Residues 382–402 (VMGMTLLAAGTSIPDTVASVM) form a helical membrane-spanning segment. Residues 403-420 (VAREGKSDMAMSNIVGSN) lie on the Extracellular side of the membrane. Residues 421 to 441 (VFDMLCLGLPWFIQTVFVDVG) form a helical membrane-spanning segment. The Cytoplasmic segment spans residues 442 to 450 (SPVEVNSSG). A helical transmembrane segment spans residues 451–471 (LVFMSCTLLLSIIFLFLAVHI). Topologically, residues 472 to 482 (NGWKLDWKLGL) are extracellular. A helical transmembrane segment spans residues 483–503 (VCLACYILFATLSILYELGII). Residues 504–513 (GNNPIRSCSD) are Cytoplasmic-facing.

Belongs to the Ca(2+):cation antiporter (CaCA) (TC 2.A.19) family. SLC24A subfamily. As to expression, highly expressed in melanin-producing cells. Colocalizes with melanin biosynthesis marker dct.

It is found in the golgi apparatus. It localises to the trans-Golgi network membrane. The protein resides in the melanosome. The enzyme catalyses Ca(2+)(out) + K(+)(out) + 4 Na(+)(in) = Ca(2+)(in) + K(+)(in) + 4 Na(+)(out). Its function is as follows. Calcium, potassium:sodium antiporter that transports 1 Ca(2+) and 1 K(+) to the melanosome in exchange for 4 cytoplasmic Na(+). Involved in pigmentation, possibly by participating in ion transport in melanosomes. Predominant sodium-calcium exchanger in melanocytes. The sequence is that of Sodium/potassium/calcium exchanger 5 (slc24a5) from Danio rerio (Zebrafish).